A 241-amino-acid chain; its full sequence is 2,3,4,5-tetrahydropyridine-2,6-dicarboxylate N-acetyltransferase (241 aa).

The protein belongs to the transferase hexapeptide repeat family. DapH subfamily.

It catalyses the reaction (S)-2,3,4,5-tetrahydrodipicolinate + acetyl-CoA + H2O = L-2-acetamido-6-oxoheptanedioate + CoA. It functions in the pathway amino-acid biosynthesis; L-lysine biosynthesis via DAP pathway; LL-2,6-diaminopimelate from (S)-tetrahydrodipicolinate (acetylase route): step 1/3. Its function is as follows. Catalyzes the transfer of an acetyl group from acetyl-CoA to tetrahydrodipicolinate. The chain is 2,3,4,5-tetrahydropyridine-2,6-dicarboxylate N-acetyltransferase from Caldanaerobacter subterraneus subsp. tengcongensis (strain DSM 15242 / JCM 11007 / NBRC 100824 / MB4) (Thermoanaerobacter tengcongensis).